The chain runs to 141 residues: Large ribosomal subunit protein uL13 (141 aa).

The protein belongs to the universal ribosomal protein uL13 family. In terms of assembly, part of the 50S ribosomal subunit.

This protein is one of the early assembly proteins of the 50S ribosomal subunit, although it is not seen to bind rRNA by itself. It is important during the early stages of 50S assembly. The sequence is that of Large ribosomal subunit protein uL13 from Helicobacter pylori (strain Shi470).